A 533-amino-acid chain; its full sequence is Protein transport protein SEC9 (533 aa).

4 disordered regions span residues 1-32 (MGFKKFFGIRPPEEDTPERNRDLLTEEGIATK), 68-184 (RPGA…MNAT), 200-246 (MAQD…KRAP), and 259-284 (PTNEDDDLNNSIHEGNEGLNGQGQAP). A compositionally biased stretch (basic and acidic residues) spans 11–24 (PPEEDTPERNRDLL). The segment covering 92–102 (GNTSRVGQPQQ) has biased composition (polar residues). Gly residues predominate over residues 157 to 172 (GGPGNPYGGSTAGAGT). Residues 227–240 (RPQAAAETPRPQAA) show a composition bias toward low complexity. T-SNARE coiled-coil homology domains follow at residues 318–380 (RFTK…VAEL) and 470–532 (DEME…LTNI).

The protein belongs to the SNAP-25 family.

This chain is Protein transport protein SEC9 (SEC9), found in Eremothecium gossypii (strain ATCC 10895 / CBS 109.51 / FGSC 9923 / NRRL Y-1056) (Yeast).